The following is a 298-amino-acid chain: tRNA (guanine(9)-N1)-methyltransferase (298 aa).

Polar residues predominate over residues 1–10; that stretch reads MSDTSENSNA. The disordered stretch occupies residues 1-44; it reads MSDTSENSNAEIPADTSDVKDKPKPIVRAPQFPPPPEGISKSQW. Residues 96-285 enclose the SAM-dependent MTase TRM10-type domain; it reads PPKVNLNQSD…SVLPPRKLEV (190 aa). Residues 192–193, Gly-212, 216–220, Cys-224, Leu-238, and 250–252 contribute to the S-adenosyl-L-methionine site; these read LT, DKNRH, and KVL. The active-site Proton acceptor is Asp-216.

It belongs to the class IV-like SAM-binding methyltransferase superfamily. TRM10 family. As to quaternary structure, monomer.

It localises to the cytoplasm. The protein localises to the nucleus. The catalysed reaction is guanosine(9) in tRNA + S-adenosyl-L-methionine = N(1)-methylguanosine(9) in tRNA + S-adenosyl-L-homocysteine + H(+). In terms of biological role, S-adenosyl-L-methionine-dependent guanine N(1)-methyltransferase that catalyzes the formation of N(1)-methylguanine at position 9 (m1G9) in cytoplasmic tRNA. The chain is tRNA (guanine(9)-N1)-methyltransferase from Kluyveromyces lactis (strain ATCC 8585 / CBS 2359 / DSM 70799 / NBRC 1267 / NRRL Y-1140 / WM37) (Yeast).